The primary structure comprises 379 residues: Cobalt-precorrin-5B C(1)-methyltransferase (379 aa).

It belongs to the CbiD family.

It catalyses the reaction Co-precorrin-5B + S-adenosyl-L-methionine = Co-precorrin-6A + S-adenosyl-L-homocysteine. Its pathway is cofactor biosynthesis; adenosylcobalamin biosynthesis; cob(II)yrinate a,c-diamide from sirohydrochlorin (anaerobic route): step 6/10. Functionally, catalyzes the methylation of C-1 in cobalt-precorrin-5B to form cobalt-precorrin-6A. The polypeptide is Cobalt-precorrin-5B C(1)-methyltransferase (Edwardsiella ictaluri (strain 93-146)).